Here is a 537-residue protein sequence, read N- to C-terminus: uncharacterized protein (537 aa).

This is an uncharacterized protein from Methanocaldococcus jannaschii (strain ATCC 43067 / DSM 2661 / JAL-1 / JCM 10045 / NBRC 100440) (Methanococcus jannaschii).